The following is a 155-amino-acid chain: MVKGQGNVVAQNKKAHHDYTIVETIEAGIVLTGTEIKSVRAARITLKDGYAQIKNGEAWLINVHITPYDQGNIWNQDPDRTRKLLLKKREIEKISNELKGTGMTLVPLKVYLKDGFAKVLLGLAKGKHDYDKRESIKRREQNRDIARQLKNYNSR.

Belongs to the SmpB family.

The protein localises to the cytoplasm. In terms of biological role, required for rescue of stalled ribosomes mediated by trans-translation. Binds to transfer-messenger RNA (tmRNA), required for stable association of tmRNA with ribosomes. tmRNA and SmpB together mimic tRNA shape, replacing the anticodon stem-loop with SmpB. tmRNA is encoded by the ssrA gene; the 2 termini fold to resemble tRNA(Ala) and it encodes a 'tag peptide', a short internal open reading frame. During trans-translation Ala-aminoacylated tmRNA acts like a tRNA, entering the A-site of stalled ribosomes, displacing the stalled mRNA. The ribosome then switches to translate the ORF on the tmRNA; the nascent peptide is terminated with the 'tag peptide' encoded by the tmRNA and targeted for degradation. The ribosome is freed to recommence translation, which seems to be the essential function of trans-translation. This Streptococcus agalactiae serotype Ia (strain ATCC 27591 / A909 / CDC SS700) protein is SsrA-binding protein.